The primary structure comprises 232 residues: Ras association domain-containing protein 3 (232 aa).

Serine 2 carries the post-translational modification N-acetylserine. The disordered stretch occupies residues 25-46 (RAPPGKSRSGQPDVEKEKETHN). Positions 37-46 (DVEKEKETHN) are enriched in basic and acidic residues. Residues 78 to 180 (YTGFIKVQME…TLSFVLREHE (103 aa)) enclose the Ras-associating domain. Residues 181–228 (IGEWEAFSLPELQNFLRILDKEEDEQLQSLKRRYTAYRQKLEEALGEV) enclose the SARAH domain.

The protein resides in the cytoplasm. It localises to the cytoskeleton. The protein is Ras association domain-containing protein 3 (Rassf3) of Mus musculus (Mouse).